A 433-amino-acid polypeptide reads, in one-letter code: Phosphomethylpyrimidine synthase 2 (433 aa).

Substrate contacts are provided by residues N66, M94, Y123, H162, 184-186 (SRG), 225-228 (DALR), and E264. H268 contacts Zn(2+). Position 291 (Y291) interacts with substrate. H332 is a Zn(2+) binding site. [4Fe-4S] cluster-binding residues include C408, C411, and C415.

This sequence belongs to the ThiC family. Requires [4Fe-4S] cluster as cofactor.

It carries out the reaction 5-amino-1-(5-phospho-beta-D-ribosyl)imidazole + S-adenosyl-L-methionine = 4-amino-2-methyl-5-(phosphooxymethyl)pyrimidine + CO + 5'-deoxyadenosine + formate + L-methionine + 3 H(+). It functions in the pathway cofactor biosynthesis; thiamine diphosphate biosynthesis. Functionally, catalyzes the synthesis of the hydroxymethylpyrimidine phosphate (HMP-P) moiety of thiamine from aminoimidazole ribotide (AIR) in a radical S-adenosyl-L-methionine (SAM)-dependent reaction. The polypeptide is Phosphomethylpyrimidine synthase 2 (Saccharolobus solfataricus (strain ATCC 35092 / DSM 1617 / JCM 11322 / P2) (Sulfolobus solfataricus)).